The chain runs to 3795 residues: NBPF family member NBPF10 (3795 aa).

The stretch at 75–119 (RQFKEEKLAEQLKQAEELRQYKVLVHSQERELTQLREKLREGRDA) forms a coiled coil. The interval 161–200 (KLSPENDEDEDEDVQVEEAEKVLESSAPREVQKAEESKVP) is disordered. Over residues 165–177 (ENDEDEDEDVQVE) the composition is skewed to acidic residues. In terms of domain architecture, Olduvai 1 spans 165–259 (ENDEDEDEDV…ECQDALNILP (95 aa)). A compositionally biased stretch (basic and acidic residues) spans 190–200 (EVQKAEESKVP). Residues 346-390 (RQFKEEKLAEQLKQAEELRQYKVLVHAQERELTQLKEKLREGRDA) are a coiled coil. Olduvai domains follow at residues 436-528 (ENDN…HIIP), 529-600 (ENES…VDIG), 601-692 (RHRW…PSCP), 695-750 (SREL…LDVD), 751-843 (RIKK…RSKK), 844-936 (ERRR…PSCP), 939-994 (SREL…LDVD), 995-1087 (RIKK…RSKK), 1088-1180 (ERRR…PSCP), 1183-1238 (SREL…LDVD), 1239-1331 (RIKK…RSKK), 1332-1424 (ERRR…PSCP), 1427-1482 (SREL…LDVD), 1483-1575 (RIKK…RSKK), 1576-1668 (ERRR…PSCP), 1671-1726 (SREL…LDVD), 1727-1819 (RIKK…RSKK), 1820-1912 (ERRR…PSCP), 1915-1970 (SREL…LDVD), 1971-2063 (RIKK…RSKK), 2064-2156 (ERRR…PSCP), 2159-2214 (SREL…LDVD), 2215-2307 (RIKK…RSKK), 2308-2400 (ERRR…PSCP), 2403-2458 (SREL…LDVD), 2459-2551 (RIKK…RSKK), 2552-2644 (ERRR…PSCP), 2647-2702 (SREL…LDVD), 2703-2795 (RIKK…RSKK), 2796-2888 (ERRR…PSCP), 2891-2946 (SREL…LDVD), 2947-3039 (RIKK…RSKK), 3040-3132 (ERRR…PSCP), 3135-3190 (SREL…LDVD), 3191-3283 (RIKK…RSKK), 3284-3376 (ERRR…PSCP), 3379-3434 (SREL…LDVD), 3435-3527 (RIKK…RSKK), 3528-3620 (ERRR…PSCP), 3623-3696 (SREL…RSKK), and 3697-3795 (ERRR…IFPQ). Disordered regions lie at residues 451 to 475 (EKVQ…EDSL) and 520 to 566 (WEDA…EGYS). Composition is skewed to acidic residues over residues 530-539 (NESDDEEEEE) and 550-562 (ESEE…ESWD). The tract at residues 830–868 (KGKGKKRRGRRSKKERRRGRKEGEEDQNPPCPRLSRELL) is disordered. Residues 831-849 (GKGKKRRGRRSKKERRRGR) are compositionally biased toward basic residues. The interval 1073 to 1109 (KKGKGKKRRGRRSKKERRRGRKEGEEDQNPPCPRLSR) is disordered. The segment covering 1075 to 1093 (GKGKKRRGRRSKKERRRGR) has biased composition (basic residues). Disordered stretches follow at residues 1242–1261 (KDEE…SREL) and 1318–1353 (KGKG…RLSR). Residues 1319 to 1337 (GKGKKRRGRRSKKERRRGR) show a composition bias toward basic residues. The interval 1562 to 1600 (KGKGKKRRGRRSKKERRRGRKEGEEDQNPPCPRLSRELL) is disordered. Basic residues predominate over residues 1563 to 1581 (GKGKKRRGRRSKKERRRGR). The tract at residues 1806–1844 (KGKGKKRRGRRSKKERRRGRKEGEEDQNPPCPRLSRELL) is disordered. Residues 1807 to 1825 (GKGKKRRGRRSKKERRRGR) are compositionally biased toward basic residues. Residues 2050–2088 (KGKGKKRRGRRSKKERRRGRKEGEEDQNPPCPRLSRELL) are disordered. Over residues 2051–2069 (GKGKKRRGRRSKKERRRGR) the composition is skewed to basic residues. Residues 2294 to 2332 (KGKGKKRRGRRSKKERRRGRKEGEEDQNPPCPRLSRELL) form a disordered region. Basic residues predominate over residues 2295-2313 (GKGKKRRGRRSKKERRRGR). The tract at residues 2538-2576 (KGKGKKRRGRRSKKERRRGRKEGEEDQNPPCPRLSRELL) is disordered. Basic residues predominate over residues 2539 to 2557 (GKGKKRRGRRSKKERRRGR). The segment at 2782 to 2820 (KGKGKKRRGRRSKKERRRGRKEGEEDQNPPCPRLSRELL) is disordered. Residues 2783–2801 (GKGKKRRGRRSKKERRRGR) show a composition bias toward basic residues. The segment at 3026–3064 (KGKGKKRRGRRSKKERRRGRKEGEEDQNPPCPRLSRELL) is disordered. Positions 3027 to 3045 (GKGKKRRGRRSKKERRRGR) are enriched in basic residues. 2 disordered regions span residues 3194-3213 (KDEE…SREL) and 3270-3308 (KGKG…RELL). The segment covering 3271 to 3289 (GKGKKRRGRRSKKERRRGR) has biased composition (basic residues). 2 disordered regions span residues 3514–3552 (KGKG…RELL) and 3684–3716 (GKGK…CPRL). 2 stretches are compositionally biased toward basic residues: residues 3515–3533 (GKGK…RRGR) and 3684–3702 (GKGK…RRGR).

Belongs to the NBPF family.

The protein localises to the cytoplasm. In Homo sapiens (Human), this protein is NBPF family member NBPF10.